The chain runs to 212 residues: Probable dual specificity protein phosphatase DDB_G0269404 (212 aa).

Residues 30–169 (FDAQEVIPNL…LINYEATILK (140 aa)) form the Tyrosine-protein phosphatase domain. The active-site Phosphocysteine intermediate is the Cys-113.

The protein belongs to the protein-tyrosine phosphatase family. Non-receptor class dual specificity subfamily.

The catalysed reaction is O-phospho-L-tyrosyl-[protein] + H2O = L-tyrosyl-[protein] + phosphate. It catalyses the reaction O-phospho-L-seryl-[protein] + H2O = L-seryl-[protein] + phosphate. It carries out the reaction O-phospho-L-threonyl-[protein] + H2O = L-threonyl-[protein] + phosphate. Has a dual specificity toward Ser/Thr and Tyr-containing proteins. This Dictyostelium discoideum (Social amoeba) protein is Probable dual specificity protein phosphatase DDB_G0269404.